The primary structure comprises 484 residues: Cytochrome P450 monooxygenase poxD (484 aa).

A helical transmembrane segment spans residues 2–24 (VSPVVLATTAMIVVFLLAQRYLS). Residue Cys-429 coordinates heme.

The protein belongs to the cytochrome P450 family. Heme serves as cofactor.

It localises to the membrane. Its pathway is secondary metabolite biosynthesis. Functionally, cytochrome P450 monooxygenase; part of the gene cluster that mediates the biosynthesis of oxaleimides, cytotoxic compounds containing an unusual disubstituted succinimide moiety. The first step of the pathway is provided by the HR-PKS poxF that serves in a new mode of collaborative biosynthesis with the PKS-NRPS poxE, by providing the olefin containing amino acid substrate via the synthesis of an ACP-bound dec-4-enoate. The cytochrome P450 monooxygenase poxM-catalyzed oxidation at the alpha-position creates the enzyme-bound 2-hydroxydec-4-enoyl-ACP thioester, which may be prone to spontaneous hydrolysis to yield 2-hydroxydec-4-enoic acid due to increased electrophilicity of the carbonyl. 2-hydroxydec-4-enoic acid can then be further oxidized by poxM to yield the alpha-ketoacid 2-oxodec-4-enoicacid, which is reductively aminated by the aminotransferase poxL to yield (S,E)-2-aminodec-4-enoic acid. The Hybrid PKS-NRPS synthetase poxE then performs condensation between the octaketide product of its PKS modules and the amino group of (S,E)-2-aminodec-4-enoic acid which is activated and incorporated by the adenylation domain. The resulting aminoacyl product can be cyclized by the Diels-Alderase PoxQ and reductively released by the reductive (R) domain of poxE to yield an aldehyde intermediate. The released aldehyde is then substrate for a Knoevenagel condensation by the hydrolyase poxO followed by an oxidation at the 5-position of the pyrrolidone ring. The presence of the olefin from the amino acid building block allows for migration of the substituted allyl group to occur. This allylic transposition reaction takes place in a conjugate addition, semipinacol-like fashion to yield a succinimide intermediate. Iterative two-electron oxidations of the C7 methyl of the succinimide intermediate to the carboxylic acid can be catalyzed by one of two remaining cytochrome P450 monooxygenasess poxC or poxD to yield oxaleimide A. Subsequent oxidation yields the maleimide scaffold oxaleimide I. Both oxaleimide A and oxaleimide I can undergo oxidative modifications in the decalin ring to yield the series of products oxaleimides B to H. This chain is Cytochrome P450 monooxygenase poxD, found in Penicillium oxalicum.